A 526-amino-acid chain; its full sequence is Adenylyl cyclase-associated protein (526 aa).

Positions 1–168 (MPDSKYTMQG…RQSKYFAYLS (168 aa)) are adenyl cyclase-binding. 3 disordered regions span residues 43–72 (EASKNNKPSDSGADANTTNEPSAENAPEVE), 255–304 (QSTK…DANK), and 326–371 (KVDK…RPPR). The segment covering 45 to 64 (SKNNKPSDSGADANTTNEPS) has biased composition (polar residues). The short motif at 169–369 (ALSEGAPLFS…KPSTLKTKRP (201 aa)) is the SH3-binding element. Residues 262 to 274 (ATSSPSPASATAA) show a composition bias toward low complexity. Residues 275–285 (PAPPPPPPAPP) are compositionally biased toward pro residues. The span at 290-302 (EISNDTPATSSDA) shows a compositional bias: polar residues. Over residues 326-338 (KVDKSQQTHKNPE) the composition is skewed to basic and acidic residues. Residues 342–352 (SSTVSSTGSKS) are compositionally biased toward low complexity. An interaction with SH3 domain of ABP1 region spans residues 354-361 (PPPRPKKP). The segment covering 357–370 (RPKKPSTLKTKRPP) has biased composition (basic residues). A C-CAP/cofactor C-like domain is found at 369 to 504 (PPRKELVGNK…EDDDYVEFPI (136 aa)). Residues 370 to 526 (PRKELVGNKW…FKSAVFEHAG (157 aa)) form a dimerization and actin-binding region. S454 carries the phosphoserine modification.

Belongs to the CAP family. As to quaternary structure, homodimer.

It is found in the cytoplasm. The protein resides in the cytoskeleton. It localises to the actin patch. The N-terminal domain binds to adenylyl cyclase, thereby enabling adenylyl cyclase to be activated by upstream regulatory signals, such as Ras. The C-terminal domain is required for normal cellular morphology and growth control. This Saccharomyces cerevisiae (strain ATCC 204508 / S288c) (Baker's yeast) protein is Adenylyl cyclase-associated protein (SRV2).